We begin with the raw amino-acid sequence, 254 residues long: Triosephosphate isomerase (254 aa).

12-14 contributes to the substrate binding site; that stretch reads NWK. His-99 (electrophile) is an active-site residue. Glu-169 functions as the Proton acceptor in the catalytic mechanism. Substrate-binding positions include Gly-175, Ser-214, and 235–236; that span reads GG.

It belongs to the triosephosphate isomerase family. Homodimer.

The protein resides in the cytoplasm. It carries out the reaction D-glyceraldehyde 3-phosphate = dihydroxyacetone phosphate. It functions in the pathway carbohydrate biosynthesis; gluconeogenesis. The protein operates within carbohydrate degradation; glycolysis; D-glyceraldehyde 3-phosphate from glycerone phosphate: step 1/1. In terms of biological role, involved in the gluconeogenesis. Catalyzes stereospecifically the conversion of dihydroxyacetone phosphate (DHAP) to D-glyceraldehyde-3-phosphate (G3P). The protein is Triosephosphate isomerase of Bartonella bacilliformis (strain ATCC 35685 / KC583 / Herrer 020/F12,63).